The primary structure comprises 201 residues: Probable nicotinate-nucleotide adenylyltransferase (201 aa).

This sequence belongs to the NadD family.

It catalyses the reaction nicotinate beta-D-ribonucleotide + ATP + H(+) = deamido-NAD(+) + diphosphate. It functions in the pathway cofactor biosynthesis; NAD(+) biosynthesis; deamido-NAD(+) from nicotinate D-ribonucleotide: step 1/1. Functionally, catalyzes the reversible adenylation of nicotinate mononucleotide (NaMN) to nicotinic acid adenine dinucleotide (NaAD). In Clostridium botulinum (strain Langeland / NCTC 10281 / Type F), this protein is Probable nicotinate-nucleotide adenylyltransferase.